Here is a 713-residue protein sequence, read N- to C-terminus: Low-density lipoprotein receptor-related protein 10 (713 aa).

Residues 1 to 17 form the signal peptide; sequence MLSALPLLFLLLGGALA. The Extracellular portion of the chain corresponds to 18–441; it reads RPDRITFPRS…WDCSYALPRK (424 aa). 2 cysteine pairs are disulfide-bonded: C29/C58 and C81/C99. One can recognise a CUB 1 domain in the interval 29–137; it reads CEAPPAVLSE…QGFLLTYSQD (109 aa). N57 carries N-linked (GlcNAc...) asparagine glycosylation. N112 is a glycosylation site (N-linked (GlcNAc...) asparagine). The LDL-receptor class A 1 domain maps to 140-176; sequence LCLQEEFQCLNHRCIPAAQRCDGIDACGDGSDEAGCS. Cystine bridges form between C141/C153, C148/C166, C160/C175, and C193/C221. Positions 193 to 306 constitute a CUB 2 domain; it reads CNLTLEDFYG…RGFNATYHVR (114 aa). N-linked (GlcNAc...) asparagine glycosylation is found at N194 and N300. 3 consecutive LDL-receptor class A domains span residues 308-355, 356-398, and 399-435; these read YCLP…EGCP, GCPP…RRCR, and HCQPGNFRCRDEKCVYETWVCDGQPDCTDGSDEWDCS. Cystine bridges form between C309–C332, C316–C345, C339–C354, C357–C375, C364–C388, C382–C397, C400–C412, C407–C425, and C419–C434. The chain crosses the membrane as a helical span at residues 442–462; sequence VITAAVIGSLVCGLLLVIALG. Topologically, residues 463 to 713 are cytoplasmic; sequence CTCKLYAIRT…VEAEDEPLLA (251 aa). The tract at residues 566-636 is disordered; that stretch reads LLPRTNTPAR…TLPALATVSE (71 aa). The residue at position 596 (T596) is a Phosphothreonine. Positions 614–626 are enriched in pro residues; that stretch reads PPLPIKTPIPTPS.

It belongs to the LDLR family. In terms of tissue distribution, highly expressed in heart, lung, liver and liver. Expressed at low level in brain and spleen. Weakly or not expressed in testis and skeletal muscle. In liver, it is expressed in hepatocytes and at higher level in sinusoidal lining. In the kidney, it is expressed in peritubular capillaries. In brain, it is expressed in the epithelium of the choroid plexus ependymal cells of the third ventricle pia matter, and to lesser extent in hippocampal fields CA2 and CA3.

The protein localises to the membrane. Its subcellular location is the coated pit. Probable receptor, which is involved in the internalization of lipophilic molecules and/or signal transduction. May be involved in the uptake of lipoprotein APOE in liver. The sequence is that of Low-density lipoprotein receptor-related protein 10 (Lrp10) from Mus musculus (Mouse).